A 308-amino-acid polypeptide reads, in one-letter code: tRNA-cytidine(32) 2-sulfurtransferase (308 aa).

A PP-loop motif motif is present at residues 39 to 44 (SGGKDS). [4Fe-4S] cluster-binding residues include Cys-114, Cys-117, and Cys-205.

It belongs to the TtcA family. Homodimer. The cofactor is Mg(2+). Requires [4Fe-4S] cluster as cofactor.

The protein localises to the cytoplasm. The catalysed reaction is cytidine(32) in tRNA + S-sulfanyl-L-cysteinyl-[cysteine desulfurase] + AH2 + ATP = 2-thiocytidine(32) in tRNA + L-cysteinyl-[cysteine desulfurase] + A + AMP + diphosphate + H(+). It functions in the pathway tRNA modification. In terms of biological role, catalyzes the ATP-dependent 2-thiolation of cytidine in position 32 of tRNA, to form 2-thiocytidine (s(2)C32). The sulfur atoms are provided by the cysteine/cysteine desulfurase (IscS) system. The chain is tRNA-cytidine(32) 2-sulfurtransferase from Cupriavidus taiwanensis (strain DSM 17343 / BCRC 17206 / CCUG 44338 / CIP 107171 / LMG 19424 / R1) (Ralstonia taiwanensis (strain LMG 19424)).